The following is a 619-amino-acid chain: Lateral signaling target protein 2 homolog (619 aa).

The FYVE-type zinc-finger motif lies at 501–561; it reads DSDCEQCTAC…VCNLCFLYKI (61 aa). Positions 507, 510, 523, 526, 531, 534, 553, and 556 each coordinate Zn(2+). A disordered region spans residues 598–619; the sequence is HERSQDGSQSNESPTATTATTI. Polar residues predominate over residues 603 to 619; the sequence is DGSQSNESPTATTATTI.

It belongs to the lst-2 family.

Its function is as follows. Negative regulator of epidermal growth factor receptor (EGFR) signaling. The sequence is that of Lateral signaling target protein 2 homolog from Brugia malayi (Filarial nematode worm).